The chain runs to 157 residues: Mediator of RNA polymerase II transcription subunit 22 (157 aa).

It belongs to the Mediator complex subunit 22 family. Component of the Mediator complex.

The protein localises to the nucleus. In terms of biological role, component of the Mediator complex, a coactivator involved in the regulated transcription of nearly all RNA polymerase II-dependent genes. Mediator functions as a bridge to convey information from gene-specific regulatory proteins to the basal RNA polymerase II transcription machinery. Mediator is recruited to promoters by direct interactions with regulatory proteins and serves as a scaffold for the assembly of a functional preinitiation complex with RNA polymerase II and the general transcription factors. The protein is Mediator of RNA polymerase II transcription subunit 22 (mdt-22) of Caenorhabditis elegans.